We begin with the raw amino-acid sequence, 210 residues long: Ras-related protein Rab-43 (210 aa).

Residue G23–T30 participates in GTP binding. The Effector region motif lies at Q45 to F53. At S47 the chain carries Phosphoserine. D71–Q75 lines the GTP pocket. The residue at position 80 (T80) is a Phosphothreonine. Residues N129–D132 and A161–K162 contribute to the GTP site. S-geranylgeranyl cysteine attachment occurs at residues C208 and C210. Residue C210 is modified to Cysteine methyl ester.

It belongs to the small GTPase superfamily. Rab family. In terms of assembly, interacts with GDI1, GDI2 and CHM; phosphorylation at Thr-80 disrupts these interactions.

It is found in the cytoplasmic vesicle. The protein localises to the phagosome. The protein resides in the phagosome membrane. It localises to the golgi apparatus. Its subcellular location is the trans-Golgi network membrane. It is found in the trans-Golgi network. The small GTPases Rab are key regulators of intracellular membrane trafficking, from the formation of transport vesicles to their fusion with membranes. Rabs cycle between an inactive GDP-bound form and an active GTP-bound form that is able to recruit to membranes different set of downstream effectors directly responsible for vesicle formation, movement, tethering and fusion. The low intrinsic GTPase activity of RAB43 is activated by USP6NL. Involved in retrograde transport from the endocytic pathway to the Golgi apparatus. Involved in the transport of Shiga toxin from early and recycling endosomes to the trans-Golgi network. Required for the structural integrity of the Golgi complex. Plays a role in the maturation of phagosomes that engulf pathogens, such as S.aureus and Mycobacterium. The chain is Ras-related protein Rab-43 (Rab43) from Rattus norvegicus (Rat).